A 726-amino-acid chain; its full sequence is Disintegrin and metalloproteinase domain-containing protein 20 (726 aa).

Positions 1–31 are cleaved as a signal peptide; the sequence is MAVGEPLVHIRVTLLLLWFGMFLSISGHSQA. A propeptide spanning residues 32-206 is cleaved from the precursor; it reads RPSQYFTSPE…SSFVGWWTHQ (175 aa). The short motif at 171 to 178 is the Cysteine switch element; sequence MRCGLTEE. Residue Cys173 coordinates Zn(2+). N-linked (GlcNAc...) asparagine glycosylation is found at Asn191 and Asn226. The Peptidase M12B domain occupies 207–400; that stretch reads RFVELVVVVD…SGLCIQPPPY (194 aa). The Extracellular segment spans residues 207 to 693; that stretch reads RFVELVVVVD…GLNVMGKLRY (487 aa). 3 disulfides stabilise this stretch: Cys317–Cys394, Cys357–Cys379, and Cys359–Cys364. Residue His342 participates in Zn(2+) binding. Residue Glu343 is part of the active site. Residues His346 and His352 each contribute to the Zn(2+) site. Asn378, Asn438, Asn479, and Asn587 each carry an N-linked (GlcNAc...) asparagine glycan. Positions 407-493 constitute a Disintegrin domain; the sequence is LKYCGNLVVE…QCPDDVYVQD (87 aa). Cys465 and Cys485 are disulfide-bonded. Cystine bridges form between Cys635–Cys646, Cys640–Cys652, and Cys654–Cys663. Residues 635-663 enclose the EGF-like domain; that stretch reads CQPKTCNMRGICNNKQHCHCNHEWAPPYC. A helical transmembrane segment spans residues 694–714; it reads LSLLCLLPLVAFLLFCLHVLF. Residues 715 to 726 are Cytoplasmic-facing; sequence KKRTKSKEDEEG.

Zn(2+) serves as cofactor. Has no obvious cleavage site for furin endopeptidase, suggesting that the proteolytic processing is regulated. Testis specific.

Its subcellular location is the membrane. Its function is as follows. May be involved in sperm maturation and/or fertilization. This chain is Disintegrin and metalloproteinase domain-containing protein 20 (ADAM20), found in Homo sapiens (Human).